Consider the following 368-residue polypeptide: ICEBs1 integrase (368 aa).

The 83-residue stretch at 61 to 143 folds into the Core-binding (CB) domain; it reads VSFPTLISIY…SLSKIFDTAV (83 aa). One can recognise a Tyr recombinase domain in the interval 164–362; the sequence is KKMKFWRPEE…YPNKQKEMAD (199 aa). Catalysis depends on residues R201, K239, H313, R316, and H339. Y349 (O-(3'-phospho-DNA)-tyrosine intermediate) is an active-site residue.

It belongs to the 'phage' integrase family.

Putative integrase that is involved in the insertion of the integrative and conjugative element ICEBs1. Required for the excision of ICEBs1 from the donor cell genome and subsequent integration in the recipient cell genome. Appears not to be transferred through the mating pore. Integration of ICEBs1 involves an attachment site in the chromosome, attB, and a site in the circular form of ICEBs1, attICEBs1. The chain is ICEBs1 integrase (int) from Bacillus subtilis (strain 168).